The following is a 526-amino-acid chain: Peptide chain release factor 3 (526 aa).

The region spanning 9–277 (DKRRTFAIIS…GIVEWAPKPL (269 aa)) is the tr-type G domain. GTP is bound by residues 18-25 (SHPDAGKT), 86-90 (DTPGH), and 140-143 (NKCD).

This sequence belongs to the TRAFAC class translation factor GTPase superfamily. Classic translation factor GTPase family. PrfC subfamily.

It localises to the cytoplasm. In terms of biological role, increases the formation of ribosomal termination complexes and stimulates activities of RF-1 and RF-2. It binds guanine nucleotides and has strong preference for UGA stop codons. It may interact directly with the ribosome. The stimulation of RF-1 and RF-2 is significantly reduced by GTP and GDP, but not by GMP. The chain is Peptide chain release factor 3 from Shewanella frigidimarina (strain NCIMB 400).